The primary structure comprises 608 residues: Histone-arginine methyltransferase CARM1 (608 aa).

Residues 28–139 (ATVSVFPGAR…GHTLERSVFS (112 aa)) form an interaction with C9orf72 region. An SAM-dependent MTase PRMT-type domain is found at 147–454 (AVQYFQFYGY…KRQSYDISIV (308 aa)). S-adenosyl-L-methionine contacts are provided by Q160, R169, G193, and E215. S217 carries the phosphoserine modification. A Glycyl lysine isopeptide (Lys-Gly) (interchain with G-Cter in ubiquitin) cross-link involves residue K228. S-adenosyl-L-methionine-binding residues include E244 and S272. The required for nuclear translocation stretch occupies residues 347-380 (RILMAKSVKYTVNFLEAKEGDLHRIEIPFKFHML). The transactivation domain stretch occupies residues 500–608 (TGSTYNLSSG…IPTNTMHYGS (109 aa)). At R551 the chain carries Dimethylated arginine.

The protein belongs to the class I-like SAM-binding methyltransferase superfamily. Protein arginine N-methyltransferase family. In terms of assembly, homodimer. Interacts with NR1H4. Interacts with SNRPC. Interacts with the C-terminus of NCOA2/GRIP1, NCO3/ACTR and NCOA1/SRC1. Part of a complex consisting of CARM1, EP300/P300 and NCOA2/GRIP1. Interacts with FLII, TP53, myogenic factor MEF2, EP300/P300, TRIM24, CREBBP and CTNNB1. Interacts with RELA. Identified in a complex containing CARM1, TRIM24 and NCOA2/GRIP1. Interacts with NCOA3/SRC3. Interacts with SKP2. Interacts (via PH domain-like fold) with C9orf72. Interacts with PARP1; promoting PARP1 recruimtent to replication forks. In terms of processing, phosphorylation at Ser-217 is strongly increased during mitosis, and decreases rapidly to a very low, basal level after entry into the G1 phase of the cell cycle. Phosphorylation at Ser-217 interferes with S-adenosyl-L-methionine binding and strongly reduces methyltransferase activity. Phosphorylation at Ser-217 may promote cytosolic location. Post-translationally, auto-methylated on Arg-551. Methylation enhances transcription coactivator activity. Methylation is required for its role in the regulation of pre-mRNA alternative splicing. Ubiquitinated by E3 ubiquitin-protein ligase complex containing FBXO9 at Lys-228; leading to proteasomal degradation. Ubiquitously expressed. Within the brain, present in proliferating cells from lateral ventricular zone and dentate gyrus (at protein level).

Its subcellular location is the nucleus. It is found in the cytoplasm. It localises to the chromosome. It carries out the reaction L-arginyl-[protein] + 2 S-adenosyl-L-methionine = N(omega),N(omega)-dimethyl-L-arginyl-[protein] + 2 S-adenosyl-L-homocysteine + 2 H(+). Its activity is regulated as follows. Methylation of H3R17 (H3R17me) by CARM1 is stimulated by preacetylation of H3 'Lys-18' (H3K18ac) H3 'Lys-23' (H3K23ac) by EP300 and blocked by citrullination of H3 'Arg-17' (H3R17ci) by PADI4. In terms of biological role, methylates (mono- and asymmetric dimethylation) the guanidino nitrogens of arginyl residues in several proteins involved in DNA packaging, transcription regulation, pre-mRNA splicing, and mRNA stability. Recruited to promoters upon gene activation together with histone acetyltransferases from EP300/P300 and p160 families, methylates histone H3 at 'Arg-17' (H3R17me), forming mainly asymmetric dimethylarginine (H3R17me2a), leading to activation of transcription via chromatin remodeling. During nuclear hormone receptor activation and TCF7L2/TCF4 activation, acts synergically with EP300/P300 and either one of the p160 histone acetyltransferases NCOA1/SRC1, NCOA2/GRIP1 and NCOA3/ACTR or CTNNB1/beta-catenin to activate transcription. During myogenic transcriptional activation, acts together with NCOA3/ACTR as a coactivator for MEF2C. During monocyte inflammatory stimulation, acts together with EP300/P300 as a coactivator for NF-kappa-B. Acts as a coactivator for PPARG, promotes adipocyte differentiation and the accumulation of brown fat tissue. Plays a role in the regulation of pre-mRNA alternative splicing by methylation of splicing factors. Also seems to be involved in p53/TP53 transcriptional activation. Methylates EP300/P300, both at 'Arg-2142', which may loosen its interaction with NCOA2/GRIP1, and at 'Arg-580' and 'Arg-604' in the KIX domain, which impairs its interaction with CREB and inhibits CREB-dependent transcriptional activation. Also methylates arginine residues in RNA-binding proteins PABPC1, ELAVL1 and ELAV4, which may affect their mRNA-stabilizing properties and the half-life of their target mRNAs. Acts as a transcriptional coactivator of ACACA/acetyl-CoA carboxylase by enriching H3R17 methylation at its promoter, thereby positively regulating fatty acid synthesis. Independently of its methyltransferase activity, involved in replication fork progression: promotes PARP1 recruitment to replication forks, leading to poly-ADP-ribosylation of chromatin at replication forks and reduced fork speed. The sequence is that of Histone-arginine methyltransferase CARM1 (Carm1) from Mus musculus (Mouse).